The chain runs to 341 residues: DNA-directed RNA polymerase subunit alpha (341 aa).

The segment at 1–223 (MEQKRPQLKA…DELSVFGNVE (223 aa)) is alpha N-terminal domain (alpha-NTD). Residues 268-341 (PQPFPTDQDT…LAQFGLALRD (74 aa)) form an alpha C-terminal domain (alpha-CTD) region.

It belongs to the RNA polymerase alpha chain family. Homodimer. The RNAP catalytic core consists of 2 alpha, 1 beta, 1 beta' and 1 omega subunit. When a sigma factor is associated with the core the holoenzyme is formed, which can initiate transcription.

The enzyme catalyses RNA(n) + a ribonucleoside 5'-triphosphate = RNA(n+1) + diphosphate. Its function is as follows. DNA-dependent RNA polymerase catalyzes the transcription of DNA into RNA using the four ribonucleoside triphosphates as substrates. This is DNA-directed RNA polymerase subunit alpha from Deinococcus radiodurans (strain ATCC 13939 / DSM 20539 / JCM 16871 / CCUG 27074 / LMG 4051 / NBRC 15346 / NCIMB 9279 / VKM B-1422 / R1).